Reading from the N-terminus, the 615-residue chain is DNA mismatch repair protein MutL (615 aa).

The interval 363-397 (FAEPAVREPVAPRYTPAPASGSRPAAPWPNAQPGY) is disordered. Residues 378 to 391 (PAPASGSRPAAPWP) are compositionally biased toward low complexity.

It belongs to the DNA mismatch repair MutL/HexB family.

Functionally, this protein is involved in the repair of mismatches in DNA. It is required for dam-dependent methyl-directed DNA mismatch repair. May act as a 'molecular matchmaker', a protein that promotes the formation of a stable complex between two or more DNA-binding proteins in an ATP-dependent manner without itself being part of a final effector complex. The chain is DNA mismatch repair protein MutL from Escherichia coli O157:H7.